Here is a 696-residue protein sequence, read N- to C-terminus: Tensin-4 (696 aa).

The signal sequence occupies residues 1-14 (MSSSLLAGGHMVSL). Disordered stretches follow at residues 157-246 (LDGP…RAPQ), 271-344 (SLPH…CPAS), and 356-416 (LING…KDMQ). Residues 192-203 (SSSNESLIFSGN) are compositionally biased toward polar residues. Ser-230 bears the Phosphoserine mark. Positions 271–304 (SLPHSSLSSYPSSSRSLGSPASSSSSLHSLDRGS) are enriched in low complexity. Composition is skewed to polar residues over residues 326-344 (QAVQ…CPAS) and 372-397 (PGHQ…SPSK). An SH2 domain is found at 429–536 (WFKPSITREQ…ALPCKLTIPQ (108 aa)). Residues 563–690 (CHTLYLSSVS…QVISLVTALL (128 aa)) enclose the PTB domain.

It belongs to the PTEN phosphatase protein family. As to quaternary structure, interacts (via SH2 domain) with Rho GTPase-activating protein DLC1 (via C-terminus); the interaction is independent of DLC1 tyrosine phosphorylation. Interacts with integrin ITGB1; the interaction displaces tensin TNS3 from the ITGB1 cytoplasmic tail and promotes ITGB1 stability. Interacts (via SH2 domain) with E3 ubiquitin-protein ligase CBL (phosphorylated on 'Tyr-780'); the interaction is enhanced in the presence of EGF and reduces interaction of CBL with EGFR. Interacts (via SH2 domain) with receptor tyrosine kinase MET (when phosphorylated); the interaction increases MET protein stability.

The protein localises to the cell junction. It localises to the focal adhesion. It is found in the cytoplasm. Its subcellular location is the cytoskeleton. Its function is as follows. Promotes EGF-induced cell migration by displacing tensin TNS3 from the cytoplasmic tail of integrin ITGB1 which results in dissociation of TNS3 from focal adhesions, disassembly of actin stress fibers and initiation of cell migration. Suppresses ligand-induced degradation of EGFR by reducing EGFR ubiquitination in the presence of EGF. Increases MET protein stability by inhibiting MET endocytosis and subsequent lysosomal degradation which leads to increased cell survival, proliferation and migration. The sequence is that of Tensin-4 (Tns4) from Mus musculus (Mouse).